The sequence spans 570 residues: Methionine--tRNA ligase (570 aa).

A 'HIGH' region motif is present at residues 11 to 21 (PYVQTVPHLGN). Zn(2+)-binding residues include C143, C146, C156, and C159. The 'KMSKS' region motif lies at 333-337 (KFSKS). K336 provides a ligand contact to ATP.

Belongs to the class-I aminoacyl-tRNA synthetase family. MetG type 1 subfamily. The cofactor is Zn(2+).

Its subcellular location is the cytoplasm. The enzyme catalyses tRNA(Met) + L-methionine + ATP = L-methionyl-tRNA(Met) + AMP + diphosphate. Functionally, is required not only for elongation of protein synthesis but also for the initiation of all mRNA translation through initiator tRNA(fMet) aminoacylation. In Pyrobaculum arsenaticum (strain DSM 13514 / JCM 11321 / PZ6), this protein is Methionine--tRNA ligase.